Consider the following 240-residue polypeptide: Ribonuclease HII (240 aa).

Positions 7-215 constitute an RNase H type-2 domain; the sequence is RYAIGIDEAG…LKRIAPGWYV (209 aa). Residues D13, E14, and D112 each contribute to the a divalent metal cation site.

It belongs to the RNase HII family. It depends on Mn(2+) as a cofactor. Requires Mg(2+) as cofactor.

The protein localises to the cytoplasm. The catalysed reaction is Endonucleolytic cleavage to 5'-phosphomonoester.. In terms of biological role, endonuclease that specifically degrades the RNA of RNA-DNA hybrids. This chain is Ribonuclease HII, found in Hyperthermus butylicus (strain DSM 5456 / JCM 9403 / PLM1-5).